A 600-amino-acid chain; its full sequence is Elongation factor 4 (600 aa).

The tr-type G domain maps to 5 to 187 (SRIRNFSIIA…DLIKKIPPPK (183 aa)). GTP is bound by residues 17-22 (DHGKST) and 134-137 (NKMD).

This sequence belongs to the TRAFAC class translation factor GTPase superfamily. Classic translation factor GTPase family. LepA subfamily.

Its subcellular location is the cell inner membrane. It catalyses the reaction GTP + H2O = GDP + phosphate + H(+). Its function is as follows. Required for accurate and efficient protein synthesis under certain stress conditions. May act as a fidelity factor of the translation reaction, by catalyzing a one-codon backward translocation of tRNAs on improperly translocated ribosomes. Back-translocation proceeds from a post-translocation (POST) complex to a pre-translocation (PRE) complex, thus giving elongation factor G a second chance to translocate the tRNAs correctly. Binds to ribosomes in a GTP-dependent manner. This is Elongation factor 4 from Marinobacter nauticus (strain ATCC 700491 / DSM 11845 / VT8) (Marinobacter aquaeolei).